The primary structure comprises 377 residues: Putative F-box protein At1g70380 (377 aa).

Residues 3 to 48 (NTSFETLALDMQIEILARLPLKYLMRCMCVSKKWASLIRGEDFRSA) form the F-box domain.

This is Putative F-box protein At1g70380 from Arabidopsis thaliana (Mouse-ear cress).